Here is a 140-residue protein sequence, read N- to C-terminus: Neurotrophin-7 (140 aa).

Positions 1-7 (PGPRVRR) are excised as a propeptide. Cystine bridges form between Cys-21-Cys-101, Cys-64-Cys-129, and Cys-89-Cys-131.

This sequence belongs to the NGF-beta family.

The protein localises to the secreted. In Cyprinus carpio (Common carp), this protein is Neurotrophin-7 (ntf7).